The chain runs to 420 residues: UDP-N-acetylglucosamine 1-carboxyvinyltransferase (420 aa).

A phosphoenolpyruvate-binding site is contributed by 22–23; sequence KN. Arginine 91 contacts UDP-N-acetyl-alpha-D-glucosamine. The Proton donor role is filled by cysteine 115. Cysteine 115 carries the 2-(S-cysteinyl)pyruvic acid O-phosphothioketal modification. UDP-N-acetyl-alpha-D-glucosamine contacts are provided by residues 120–124, 160–163, aspartate 305, and isoleucine 327; these read RPVDL and KVSV.

Belongs to the EPSP synthase family. MurA subfamily.

The protein resides in the cytoplasm. It catalyses the reaction phosphoenolpyruvate + UDP-N-acetyl-alpha-D-glucosamine = UDP-N-acetyl-3-O-(1-carboxyvinyl)-alpha-D-glucosamine + phosphate. The protein operates within cell wall biogenesis; peptidoglycan biosynthesis. In terms of biological role, cell wall formation. Adds enolpyruvyl to UDP-N-acetylglucosamine. The chain is UDP-N-acetylglucosamine 1-carboxyvinyltransferase from Erwinia tasmaniensis (strain DSM 17950 / CFBP 7177 / CIP 109463 / NCPPB 4357 / Et1/99).